Here is a 569-residue protein sequence, read N- to C-terminus: Glutamate--tRNA ligase (569 aa).

A 'HIGH' region motif is present at residues 110-120 (PNPNGPPTLGS).

This sequence belongs to the class-I aminoacyl-tRNA synthetase family. Glutamate--tRNA ligase type 2 subfamily.

The protein resides in the cytoplasm. It carries out the reaction tRNA(Glu) + L-glutamate + ATP = L-glutamyl-tRNA(Glu) + AMP + diphosphate. Catalyzes the attachment of glutamate to tRNA(Glu) in a two-step reaction: glutamate is first activated by ATP to form Glu-AMP and then transferred to the acceptor end of tRNA(Glu). This Methanococcoides burtonii (strain DSM 6242 / NBRC 107633 / OCM 468 / ACE-M) protein is Glutamate--tRNA ligase.